We begin with the raw amino-acid sequence, 551 residues long: Chaperonin GroEL (551 aa).

ATP-binding positions include 29-32, lysine 50, 86-90, glycine 417, and aspartate 499; these read TAGP and DGTTT.

The protein belongs to the chaperonin (HSP60) family. In terms of assembly, forms a cylinder of 14 subunits composed of two heptameric rings stacked back-to-back. Interacts with the co-chaperonin GroES.

The protein resides in the cytoplasm. It carries out the reaction ATP + H2O + a folded polypeptide = ADP + phosphate + an unfolded polypeptide.. Functionally, together with its co-chaperonin GroES, plays an essential role in assisting protein folding. The GroEL-GroES system forms a nano-cage that allows encapsulation of the non-native substrate proteins and provides a physical environment optimized to promote and accelerate protein folding. In Ehrlichia ruminantium (strain Gardel), this protein is Chaperonin GroEL.